Consider the following 205-residue polypeptide: Ribonuclease HII (205 aa).

Residues 14–205 enclose the RNase H type-2 domain; sequence ERICGIDEAG…SFKVRRLNEA (192 aa). A divalent metal cation contacts are provided by aspartate 20, glutamate 21, and aspartate 117.

This sequence belongs to the RNase HII family. Requires Mn(2+) as cofactor. Mg(2+) is required as a cofactor.

Its subcellular location is the cytoplasm. It catalyses the reaction Endonucleolytic cleavage to 5'-phosphomonoester.. In terms of biological role, endonuclease that specifically degrades the RNA of RNA-DNA hybrids. The protein is Ribonuclease HII of Chlorobium phaeovibrioides (strain DSM 265 / 1930) (Prosthecochloris vibrioformis (strain DSM 265)).